Consider the following 216-residue polypeptide: Urease accessory protein UreG (216 aa).

24–31 (GPVGSGKT) serves as a coordination point for GTP.

The protein belongs to the SIMIBI class G3E GTPase family. UreG subfamily. In terms of assembly, homodimer. UreD, UreF and UreG form a complex that acts as a GTP-hydrolysis-dependent molecular chaperone, activating the urease apoprotein by helping to assemble the nickel containing metallocenter of UreC. The UreE protein probably delivers the nickel.

The protein localises to the cytoplasm. Functionally, facilitates the functional incorporation of the urease nickel metallocenter. This process requires GTP hydrolysis, probably effectuated by UreG. This chain is Urease accessory protein UreG, found in Variovorax paradoxus (strain S110).